Reading from the N-terminus, the 471-residue chain is Proline--tRNA ligase (471 aa).

It belongs to the class-II aminoacyl-tRNA synthetase family. ProS type 3 subfamily. Homodimer.

It is found in the cytoplasm. The enzyme catalyses tRNA(Pro) + L-proline + ATP = L-prolyl-tRNA(Pro) + AMP + diphosphate. Catalyzes the attachment of proline to tRNA(Pro) in a two-step reaction: proline is first activated by ATP to form Pro-AMP and then transferred to the acceptor end of tRNA(Pro). The polypeptide is Proline--tRNA ligase (Archaeoglobus fulgidus (strain ATCC 49558 / DSM 4304 / JCM 9628 / NBRC 100126 / VC-16)).